We begin with the raw amino-acid sequence, 668 residues long: Protein PLASTID TRANSCRIPTIONALLY ACTIVE 10 (668 aa).

Residues 1 to 40 (MQICQTKLNFTFPNPTNPNFCKPKALQWSPPRRISLLPCR) constitute a chloroplast transit peptide. Positions 272-340 (GMVCEGTVTT…YRFRFPLELR (69 aa)) constitute an S1 motif domain. Residues 362 to 391 (RDGDTNPDEIRRDCGRPPEPRKDPGSKPEE) show a composition bias toward basic and acidic residues. The disordered stretch occupies residues 362-394 (RDGDTNPDEIRRDCGRPPEPRKDPGSKPEEEGL). Position 434 is a phosphoserine (S434). The interval 611–668 (KRKEGSTLASQEEETESEEEEEDDDDFDDFDYSILSDESSIGYSEQQPLVNGTQVLTD) is disordered. A compositionally biased stretch (acidic residues) spans 621–641 (QEEETESEEEEEDDDDFDDFD). Residues 646–668 (SDESSIGYSEQQPLVNGTQVLTD) are compositionally biased toward polar residues.

In terms of assembly, component of the transcriptionally active chromosome (TAC) complexes. Interacts with PTAC7.

It localises to the plastid. It is found in the chloroplast. The chain is Protein PLASTID TRANSCRIPTIONALLY ACTIVE 10 from Arabidopsis thaliana (Mouse-ear cress).